We begin with the raw amino-acid sequence, 542 residues long: MAKEIKFSEDARSAMLSGVDKLADTVKTTMGPKGRNVVLEQSYGTPTITNDGVTIAKSIELENQFENMGAKLVAEVASKTNDIAGDGTTTATVLTQAIVNAGMKNVTSGANPVGIRRGIDKATEVAVEALKKMSHDVKTKDDIEQIASISAANPEVGKLIADAMEKVGHDGVITIEDSRGVDTSVDVVEGMSFDRGYMSQYMVTDNDKMEADLDNPYILITDKKISNIQDILPLLQSVVQEGRALLIIADDITGEALPTLVLNKIRGTFNVVSVKAPGFGDRRKAQLQDIAVLTGGTVISDDLGMSLKDATVDQLGQANKVTVTKDTTTIVDGAGSKEAIQERVDQIKQEIAKSTSDFDKEKLQERLAKLSGGVAVVKVGAATETELKEKKYRIEDALNATRAAVQEGFVPGGGTALINVIPALDKIEADGDELTGINIVKAALEAPVRQIAENAGVEGSVIVNELKNEKEGIGYNAADGKFEDMIKAGIVDPTMVTRSALQNAASVSALLLTTEAVVADKPDPNANNQAPAAPQGGMGGMM.

Residues 29 to 32, 86 to 90, glycine 413, 476 to 478, and aspartate 492 each bind ATP; these read TMGP, DGTTT, and NAA. The segment at 521 to 542 is disordered; sequence KPDPNANNQAPAAPQGGMGGMM. A compositionally biased stretch (low complexity) spans 524 to 535; sequence PNANNQAPAAPQ.

It belongs to the chaperonin (HSP60) family. As to quaternary structure, forms a cylinder of 14 subunits composed of two heptameric rings stacked back-to-back. Interacts with the co-chaperonin GroES.

Its subcellular location is the cytoplasm. The catalysed reaction is ATP + H2O + a folded polypeptide = ADP + phosphate + an unfolded polypeptide.. In terms of biological role, together with its co-chaperonin GroES, plays an essential role in assisting protein folding. The GroEL-GroES system forms a nano-cage that allows encapsulation of the non-native substrate proteins and provides a physical environment optimized to promote and accelerate protein folding. The polypeptide is Chaperonin GroEL (Limosilactobacillus reuteri subsp. reuteri (strain JCM 1112) (Lactobacillus reuteri)).